Here is a 224-residue protein sequence, read N- to C-terminus: Aminopyrimidine aminohydrolase (224 aa).

Residue D44 participates in substrate binding. C135 functions as the Nucleophile in the catalytic mechanism. Substrate contacts are provided by Y139 and Y165. E207 (proton donor) is an active-site residue.

Belongs to the TenA family. Homotetramer.

The catalysed reaction is 4-amino-5-aminomethyl-2-methylpyrimidine + H2O = 4-amino-5-hydroxymethyl-2-methylpyrimidine + NH4(+). It catalyses the reaction thiamine + H2O = 5-(2-hydroxyethyl)-4-methylthiazole + 4-amino-5-hydroxymethyl-2-methylpyrimidine + H(+). Its pathway is cofactor biosynthesis; thiamine diphosphate biosynthesis. Its function is as follows. Catalyzes an amino-pyrimidine hydrolysis reaction at the C5' of the pyrimidine moiety of thiamine compounds, a reaction that is part of a thiamine salvage pathway. Thus, catalyzes the conversion of 4-amino-5-aminomethyl-2-methylpyrimidine to 4-amino-5-hydroxymethyl-2-methylpyrimidine (HMP). To a lesser extent, is also able to catalyze the hydrolytic cleavage of thiamine; however, this thiaminase activity is unlikely to be physiologically relevant. Therefore, is involved in the regeneration of the thiamine pyrimidine from thiamine degraded products present in the environment, rather than in thiamine degradation. The chain is Aminopyrimidine aminohydrolase from Halalkalibacterium halodurans (strain ATCC BAA-125 / DSM 18197 / FERM 7344 / JCM 9153 / C-125) (Bacillus halodurans).